The sequence spans 137 residues: Protein Turandot X (137 aa).

Residues 1 to 24 form the signal peptide; it reads MRVPVFQLSCLLGLIVCLLCSVKA.

It belongs to the Turandot family.

It is found in the secreted. A humoral factor that may play a role in stress tolerance. The sequence is that of Protein Turandot X from Drosophila pseudoobscura pseudoobscura (Fruit fly).